Here is a 315-residue protein sequence, read N- to C-terminus: Methionyl-tRNA formyltransferase (315 aa).

113-116 serves as a coordination point for (6S)-5,6,7,8-tetrahydrofolate; it reads SILP.

The protein belongs to the Fmt family.

It carries out the reaction L-methionyl-tRNA(fMet) + (6R)-10-formyltetrahydrofolate = N-formyl-L-methionyl-tRNA(fMet) + (6S)-5,6,7,8-tetrahydrofolate + H(+). In terms of biological role, attaches a formyl group to the free amino group of methionyl-tRNA(fMet). The formyl group appears to play a dual role in the initiator identity of N-formylmethionyl-tRNA by promoting its recognition by IF2 and preventing the misappropriation of this tRNA by the elongation apparatus. This chain is Methionyl-tRNA formyltransferase, found in Vibrio cholerae serotype O1 (strain M66-2).